The sequence spans 361 residues: Peptide chain release factor 1 (361 aa).

Gln-236 is modified (N5-methylglutamine). The tract at residues 286 to 306 (AADSQRAEARKGQVGSGDRSE) is disordered.

It belongs to the prokaryotic/mitochondrial release factor family. Post-translationally, methylated by PrmC. Methylation increases the termination efficiency of RF1.

The protein localises to the cytoplasm. Functionally, peptide chain release factor 1 directs the termination of translation in response to the peptide chain termination codons UAG and UAA. This chain is Peptide chain release factor 1, found in Magnetococcus marinus (strain ATCC BAA-1437 / JCM 17883 / MC-1).